Reading from the N-terminus, the 343-residue chain is Uroporphyrinogen decarboxylase (343 aa).

Substrate is bound by residues 26 to 30 (RQAGR), Asp-75, Tyr-150, Ser-205, and His-319.

This sequence belongs to the uroporphyrinogen decarboxylase family. As to quaternary structure, homodimer.

It is found in the cytoplasm. The enzyme catalyses uroporphyrinogen III + 4 H(+) = coproporphyrinogen III + 4 CO2. The protein operates within porphyrin-containing compound metabolism; protoporphyrin-IX biosynthesis; coproporphyrinogen-III from 5-aminolevulinate: step 4/4. Catalyzes the decarboxylation of four acetate groups of uroporphyrinogen-III to yield coproporphyrinogen-III. This Syntrophotalea carbinolica (strain DSM 2380 / NBRC 103641 / GraBd1) (Pelobacter carbinolicus) protein is Uroporphyrinogen decarboxylase.